Reading from the N-terminus, the 73-residue chain is Acyl carrier protein homolog (73 aa).

The Carrier domain maps to 1 to 72; the sequence is MAIKEWIITQ…DIIVLIEQKS (72 aa). Serine 32 bears the O-(pantetheine 4'-phosphoryl)serine mark.

In terms of processing, 4'-phosphopantetheine is transferred from CoA to a specific serine of the apo-ACP-like protein.

Its pathway is lipid metabolism; fatty acid biosynthesis. In terms of biological role, carrier of the growing fatty acid chain in fatty acid biosynthesis. The polypeptide is Acyl carrier protein homolog (Mycoplasmopsis pulmonis (strain UAB CTIP) (Mycoplasma pulmonis)).